The chain runs to 37 residues: MKVRASVKKMCDDCKVVKRKGIVRVICKVKKHKQRQG.

It belongs to the bacterial ribosomal protein bL36 family.

The polypeptide is Large ribosomal subunit protein bL36 (Sulfurimonas denitrificans (strain ATCC 33889 / DSM 1251) (Thiomicrospira denitrificans (strain ATCC 33889 / DSM 1251))).